A 644-amino-acid chain; its full sequence is Kininogen-1 (644 aa).

An N-terminal signal peptide occupies residues 1 to 18 (MKLITILFLCSRLLLSLT). Position 19 is a pyrrolidone carboxylic acid; in mature form (glutamine 19). In terms of domain architecture, Cystatin kininogen-type 1 spans 28-132 (CNDKDLFKAV…TQTCQITPAE (105 aa)). Cystine bridges form between cysteine 28–cysteine 614, cysteine 83–cysteine 94, cysteine 107–cysteine 126, cysteine 142–cysteine 145, cysteine 206–cysteine 218, cysteine 229–cysteine 248, cysteine 264–cysteine 267, cysteine 328–cysteine 340, and cysteine 351–cysteine 370. The N-linked (GlcNAc...) (complex) asparagine glycan is linked to asparagine 48. The O-glycosylated at one site only stretch occupies residues 120 to 153 (SVATQTCQITPAEGPVVTAQYDCLGCVHPISTQS). The Cystatin kininogen-type 2 domain occupies 151–254 (TQSPDLEPIL…SQNCDIYPGK (104 aa)). Residue asparagine 169 is glycosylated (N-linked (GlcNAc...) asparagine). N-linked (GlcNAc...) (complex) asparagine glycosylation occurs at asparagine 205. The 104-residue stretch at 273–376 (TNSPELEETL…TVNCQPLGMI (104 aa)) folds into the Cystatin kininogen-type 3 domain. Asparagine 294 is a glycosylation site (N-linked (GlcNAc...) (complex) asparagine). Serine 332 is modified (phosphoserine; by FAM20C). The residue at position 383 (proline 383) is a 4-hydroxyproline; partial. The segment at 387–555 (PFRSSRIGEI…TPIPSLAKPG (169 aa)) is disordered. Threonine 401 is a glycosylation site (O-linked (GalNAc...) threonine). Residues 418–434 (DSGKEQGHTRRHDWGHE) show a composition bias toward basic and acidic residues. 3 repeats span residues 420-449 (GKEQ…KHER), 450-479 (DQGH…KFKL), and 480-510 (DDDL…KNKG). Basic residues predominate over residues 435–446 (KQRKHNLGHGHK). Residues 477 to 493 (FKLDDDLEHQGGHVLDH) are compositionally biased toward basic and acidic residues. Positions 494–518 (GHKHKHGHGHGKHKNKGKKNGKHNG) are enriched in basic residues. Positions 524-539 (LASSSEDSTTPSAQTQ) are enriched in polar residues. 5 O-linked (GalNAc...) threonine glycosylation sites follow: threonine 533, threonine 542, threonine 546, threonine 557, and threonine 571. An O-linked (GalNAc...) serine glycan is attached at serine 577. An O-linked (GalNAc...) threonine glycan is attached at threonine 628.

Interacts (high molecular weight kininogen) (via amino acids 402-532) with triafestin-1 and triafestin-2, anticoagulant proteins from Triatoma infestans. Interacts (high molecular weight kininogen) (via amino acids 402-532) with short form salivary protein D7R1, an anticoagulant protein from Anopheles stephensi. Interacts (high molecular weight kininogen) (via amino acids 421-466 and 459-513) with haemaphysalin, an anticoagulant protein from Haemaphysalis longicornis. Post-translationally, bradykinin is inactivated by ACE, which removes the dipeptide Arg-Phe from its C-terminus. Bradykinin is released from kininogen by plasma kallikrein. In terms of processing, hydroxylation of Pro-383 occurs prior to the release of bradykinin. Post-translationally, phosphorylated by FAM20C in the extracellular medium. N- and O-glycosylated. O-glycosylated with core 1 or possibly core 8 glycans. In terms of processing, (Microbial infection) Bradykinin is generated upon proteolytic cleavage by S.pyogenes SpeB to produce hypotension during septic shock. As to expression, secreted in plasma. T-kinin is detected in malignant ovarian, colon and breast carcinomas, but not in benign tumors.

Its subcellular location is the secreted. The protein localises to the extracellular space. Its function is as follows. Kininogens are inhibitors of thiol proteases. HMW-kininogen plays an important role in blood coagulation by helping to position optimally prekallikrein and factor XI next to factor XII; HMW-kininogen inhibits the thrombin- and plasmin-induced aggregation of thrombocytes. LMW-kininogen inhibits the aggregation of thrombocytes. LMW-kininogen is in contrast to HMW-kininogen not involved in blood clotting. Functionally, the active peptide bradykinin is a potent vasodilatator that is released from HMW-kininogen shows a variety of physiological effects: (A) influence in smooth muscle contraction, (B) induction of hypotension, (C) natriuresis and diuresis, (D) decrease in blood glucose level, (E) it is a mediator of inflammation and causes (E1) increase in vascular permeability, (E2) stimulation of nociceptors (4E3) release of other mediators of inflammation (e.g. prostaglandins), (F) it has a cardioprotective effect (directly via bradykinin action, indirectly via endothelium-derived relaxing factor action). The protein is Kininogen-1 (KNG1) of Homo sapiens (Human).